We begin with the raw amino-acid sequence, 176 residues long: Centromere protein R (176 aa).

Residue Lys8 forms a Glycyl lysine isopeptide (Lys-Gly) (interchain with G-Cter in SUMO2) linkage. Ser17 is subject to Phosphoserine. The tract at residues 20–50 is DD1; the sequence is PSKIMRKKSITAFSPTTGTYQLSPFSSPRTP. Lys22 is covalently cross-linked (Glycyl lysine isopeptide (Lys-Gly) (interchain with G-Cter in SUMO2)). Phosphoserine is present on Ser28. The span at 34–48 shows a compositional bias: polar residues; the sequence is PTTGTYQLSPFSSPR. Residues 34 to 80 are disordered; that stretch reads PTTGTYQLSPFSSPRTPKEQEHRDGPSNGTRKWSVLSSPARQDSTVK. Over residues 49–58 the composition is skewed to basic and acidic residues; that stretch reads TPKEQEHRDG. Positions 60-80 are enriched in polar residues; the sequence is SNGTRKWSVLSSPARQDSTVK. Residues 63-66 carry the Nuclear localization signal motif; it reads TRKW. Residue Ser71 is modified to Phosphoserine. A coiled-coil region spans residues 82–112; it reads SDGFMMLLSKIERSSEKTMEIMKNLSSLQAL. The LXXLL motif motif lies at 118 to 122; the sequence is LEDLL. Positions 171-175 match the LXXIL motif motif; sequence LKAIL.

As to quaternary structure, homodimer; mediated by the coiled coil domain. Interacts with CCNA2 and MTA1. Interacts with NFKB1 NF-kappa-B subunit. Component of the CENPA-CAD complex, composed of CENPI, CENPK, CENPL, CENPO, CENPP, CENPQ, CENPR and CENPS. The CENPA-CAD complex interacts with the CENPA-NAC complex, at least composed of CENPA, CENPC, CENPH, CENPM, CENPN, CENPT and CENPU. Interacts with TASOR.

It is found in the nucleus. The protein localises to the chromosome. Its subcellular location is the centromere. The protein resides in the kinetochore. In terms of biological role, transcription coregulator that can have both coactivator and corepressor functions. Involved in the coactivation of nuclear receptors for retinoid X (RXRs) and thyroid hormone (TRs) in a ligand-dependent fashion. In contrast, it does not coactivate nuclear receptors for retinoic acid, vitamin D, progesterone receptor, nor glucocorticoid. Acts as a coactivator for estrogen receptor alpha. Acts as a transcriptional corepressor via its interaction with the NFKB1 NF-kappa-B subunit, possibly by interfering with the transactivation domain of NFKB1. Induces apoptosis in breast cancer cells, but not in other cancer cells, via a caspase-2 mediated pathway that involves mitochondrial membrane permeabilization but does not require other caspases. May also act as an inhibitor of cyclin A-associated kinase. Also acts a component of the CENPA-CAD (nucleosome distal) complex, a complex recruited to centromeres which is involved in assembly of kinetochore proteins, mitotic progression and chromosome segregation. May be involved in incorporation of newly synthesized CENPA into centromeres via its interaction with the CENPA-NAC complex. This Rattus norvegicus (Rat) protein is Centromere protein R (Itgb3bp).